Reading from the N-terminus, the 378-residue chain is Deoxyguanosinetriphosphate triphosphohydrolase-like protein (378 aa).

The disordered stretch occupies residues 1-28 (MLAPFACQPGESRGRQKPESMSTFRSPF). Residues 62-198 (RLTHSIEVAQ…AAIADDVAYS (137 aa)) form the HD domain.

Belongs to the dGTPase family. Type 2 subfamily.

The polypeptide is Deoxyguanosinetriphosphate triphosphohydrolase-like protein (Cereibacter sphaeroides (strain ATCC 17029 / ATH 2.4.9) (Rhodobacter sphaeroides)).